The following is a 460-amino-acid chain: tRNA modification GTPase MnmE (460 aa).

Residues R24, E81, and K121 each contribute to the (6S)-5-formyl-5,6,7,8-tetrahydrofolate site. Residues 218–385 (GMVVAIAGPP…LIAAIEDFAA (168 aa)) form the TrmE-type G domain. GTP-binding positions include 228 to 233 (NVGKST), 247 to 253 (SPHAGTT), and 272 to 275 (DTAG). Positions 232 and 253 each coordinate Mg(2+). K460 is a (6S)-5-formyl-5,6,7,8-tetrahydrofolate binding site.

It belongs to the TRAFAC class TrmE-Era-EngA-EngB-Septin-like GTPase superfamily. TrmE GTPase family. Homodimer. Heterotetramer of two MnmE and two MnmG subunits. The cofactor is K(+).

The protein resides in the cytoplasm. Its function is as follows. Exhibits a very high intrinsic GTPase hydrolysis rate. Involved in the addition of a carboxymethylaminomethyl (cmnm) group at the wobble position (U34) of certain tRNAs, forming tRNA-cmnm(5)s(2)U34. This is tRNA modification GTPase MnmE from Rhodopseudomonas palustris (strain BisB5).